The following is a 141-amino-acid chain: Nucleoside triphosphatase NudI (141 aa).

The Nudix hydrolase domain occupies 1–141; that stretch reads MRQRTIVCPL…RKTLRLKGLL (141 aa). A Nudix box motif is present at residues 38–59; the sequence is GGVESGERIEEALRREIREELG.

Belongs to the Nudix hydrolase family. NudI subfamily. Monomer. The cofactor is Mg(2+).

It catalyses the reaction a ribonucleoside 5'-triphosphate + H2O = a ribonucleoside 5'-phosphate + diphosphate + H(+). It carries out the reaction a 2'-deoxyribonucleoside 5'-triphosphate + H2O = a 2'-deoxyribonucleoside 5'-phosphate + diphosphate + H(+). The catalysed reaction is dUTP + H2O = dUMP + diphosphate + H(+). The enzyme catalyses dTTP + H2O = dTMP + diphosphate + H(+). It catalyses the reaction dCTP + H2O = dCMP + diphosphate + H(+). Catalyzes the hydrolysis of nucleoside triphosphates, with a preference for pyrimidine deoxynucleoside triphosphates (dUTP, dTTP and dCTP). The protein is Nucleoside triphosphatase NudI of Shigella flexneri serotype 5b (strain 8401).